The primary structure comprises 84 residues: Small ribosomal subunit protein uS17 (84 aa).

The protein belongs to the universal ribosomal protein uS17 family. In terms of assembly, part of the 30S ribosomal subunit.

Functionally, one of the primary rRNA binding proteins, it binds specifically to the 5'-end of 16S ribosomal RNA. The polypeptide is Small ribosomal subunit protein uS17 (Photobacterium profundum (strain SS9)).